Here is a 59-residue protein sequence, read N- to C-terminus: Putative HTH-type transcriptional regulator YneL (59 aa).

The HTH araC/xylS-type domain maps to 1–59 (MSPLRYQKWLRLNEVRRQMLNEHYDVTTAAYAVGYESYPISVGNIRGCLESHPREILPG). The segment at residues 26–49 (VTTAAYAVGYESYPISVGNIRGCL) is a DNA-binding region (H-T-H motif).

This Escherichia coli (strain K12) protein is Putative HTH-type transcriptional regulator YneL (yneL).